Here is a 156-residue protein sequence, read N- to C-terminus: Cyanate hydratase (156 aa).

Active-site residues include R96, E99, and S122.

Belongs to the cyanase family.

The catalysed reaction is cyanate + hydrogencarbonate + 3 H(+) = NH4(+) + 2 CO2. Functionally, catalyzes the reaction of cyanate with bicarbonate to produce ammonia and carbon dioxide. This chain is Cyanate hydratase, found in Pseudomonas paraeruginosa (strain DSM 24068 / PA7) (Pseudomonas aeruginosa (strain PA7)).